Reading from the N-terminus, the 350-residue chain is Twinfilin-1 (350 aa).

Position 2 is an N-acetylserine (Ser2). Residues Ser2–Leu139 enclose the ADF-H 1 domain. Ser143 and Ser277 each carry phosphoserine. One can recognise an ADF-H 2 domain in the interval Leu175–His313. Tyr309 carries the phosphotyrosine modification. Residues His317–Asp350 are disordered. The residue at position 349 (Thr349) is a Phosphothreonine.

This sequence belongs to the actin-binding proteins ADF family. Twinfilin subfamily. In terms of assembly, interacts with G-actin; ADP-actin form and capping protein (CP). May also be able to interact with TWF2 and phosphoinositides, PI(4,5)P2. When bound to PI(4,5)P2, it is down-regulated. Interacts with ACTG1. Phosphorylated on serine and threonine residues. As to expression, widely expressed with highest levels in brain, liver and kidney. Also expressed in heart, lung and testis. Not detected in spleen or skeletal muscle.

The protein localises to the cytoplasm. It is found in the cytoskeleton. Functionally, actin-binding protein involved in motile and morphological processes. Inhibits actin polymerization, likely by sequestering G-actin. By capping the barbed ends of filaments, it also regulates motility. Seems to play an important role in clathrin-mediated endocytosis and distribution of endocytic organelles. This chain is Twinfilin-1 (Twf1), found in Mus musculus (Mouse).